The chain runs to 2214 residues: Genome polyprotein (2214 aa).

Disordered stretches follow at residues 1–21 (MGAQ…VATG) and 600–619 (KPQK…VNSQ). Residue Gly-2 is the site of N-myristoyl glycine; by host attachment. Over 2-1525 (GAQVSSQKVG…NLNRAMTILQ (1524 aa)) the chain is Cytoplasmic. 2 amphipathic alpha-helix regions span residues 580–601 (QGIE…QPKP) and 581–601 (GIEE…QPKP). Over residues 606–619 (TAQSTPSTSGVNSQ) the composition is skewed to polar residues. Active-site for protease 2A activity residues include His-906 and Asp-924. Zn(2+)-binding residues include Cys-941 and Cys-943. Cys-995 acts as the For protease 2A activity in catalysis. 2 residues coordinate Zn(2+): Cys-1001 and His-1003. Residues 1133-1205 (GDSWLKKFTE…HQSCPSQEQQ (73 aa)) are membrane-binding. The segment at 1133–1271 (GDSWLKKFTE…SPGTGKSIAT (139 aa)) is oligomerization. The segment at 1154–1158 (SNKIS) is RNA-binding. The SF3 helicase domain maps to 1237–1393 (ENTINNYIQF…SEHSIKGKLN (157 aa)). An ATP-binding site is contributed by 1261-1268 (GSPGTGKS). 4 residues coordinate Zn(2+): Cys-1401, Cys-1404, Cys-1413, and Cys-1418. Residues 1401 to 1418 (CKDCPQPANFKKCCPLVC) form a C4-type zinc finger. The tract at residues 1445–1452 (ERNRRANI) is RNA-binding. An oligomerization region spans residues 1456–1461 (MEALFQ). The stretch at 1526-1541 (AVTTFAAVAAVVYVMY) is an intramembrane region. Residues 1542–2214 (KLFAGHQGAY…TLYRRWLDSF (673 aa)) are Cytoplasmic-facing. At Tyr-1551 the chain carries O-(5'-phospho-RNA)-tyrosine. In terms of domain architecture, Peptidase C3 spans 1571–1749 (GPGFDYAVAM…FAAALKRSYF (179 aa)). Active-site for protease 3C activity residues include His-1610, Glu-1641, and Cys-1717. One can recognise a RdRp catalytic domain in the interval 1980-2095 (EKLFAFDYTG…SYPHEVDASL (116 aa)). Mg(2+) contacts are provided by Asp-1986 and Asp-2081.

Belongs to the picornaviruses polyprotein family. Interacts with capsid protein VP1 and capsid protein VP3 to form heterotrimeric protomers. As to quaternary structure, interacts with capsid protein VP0, and capsid protein VP3 to form heterotrimeric protomers. Five protomers subsequently associate to form pentamers which serve as building blocks for the capsid. Interacts with capsid protein VP2, capsid protein VP3 and capsid protein VP4 following cleavage of capsid protein VP0. In terms of assembly, interacts with capsid protein VP1 and capsid protein VP3 in the mature capsid. Interacts with capsid protein VP0 and capsid protein VP1 to form heterotrimeric protomers. Five protomers subsequently associate to form pentamers which serve as building blocks for the capsid. Interacts with capsid protein VP4 in the mature capsid. Interacts with protein 2C; this interaction may be important for virion morphogenesis. As to quaternary structure, interacts with capsid protein VP1 and capsid protein VP3. In terms of assembly, homodimer. Homohexamer; forms a hexameric ring structure with 6-fold symmetry characteristic of AAA+ ATPases. Interacts (via N-terminus) with host RTN3 (via reticulon domain); this interaction is important for viral replication. Interacts with capsid protein VP3; this interaction may be important for virion morphogenesis. As to quaternary structure, interacts with protein 3CD. In terms of assembly, homodimer. Interacts with host GBF1. Interacts (via GOLD domain) with host ACBD3 (via GOLD domain); this interaction allows the formation of a viral protein 3A/ACBD3 heterotetramer with a 2:2 stoichiometry, which will stimulate the recruitment of host PI4KB in order to synthesize PI4P at the viral RNA replication sites. Interacts with RNA-directed RNA polymerase. As to quaternary structure, interacts with protein 3AB and with RNA-directed RNA polymerase. In terms of assembly, interacts with Viral protein genome-linked and with protein 3CD. The cofactor is Mg(2+). Specific enzymatic cleavages in vivo by the viral proteases yield processing intermediates and the mature proteins. In terms of processing, myristoylation is required for the formation of pentamers during virus assembly. Further assembly of 12 pentamers and a molecule of genomic RNA generates the provirion. Post-translationally, during virion maturation, immature virions are rendered infectious following cleavage of VP0 into VP4 and VP2. This maturation seems to be an autocatalytic event triggered by the presence of RNA in the capsid and it is followed by a conformational change infectious virion. Myristoylation is required during RNA encapsidation and formation of the mature virus particle. In terms of processing, VPg is uridylylated by the polymerase into VPg-pUpU. This acts as a nucleotide-peptide primer for the genomic RNA replication.

It is found in the virion. Its subcellular location is the host cytoplasm. The protein localises to the host cytoplasmic vesicle membrane. The protein resides in the host nucleus. It catalyses the reaction a ribonucleoside 5'-triphosphate + H2O = a ribonucleoside 5'-diphosphate + phosphate + H(+). The enzyme catalyses Selective cleavage of Tyr-|-Gly bond in the picornavirus polyprotein.. It carries out the reaction RNA(n) + a ribonucleoside 5'-triphosphate = RNA(n+1) + diphosphate. The catalysed reaction is Selective cleavage of Gln-|-Gly bond in the poliovirus polyprotein. In other picornavirus reactions Glu may be substituted for Gln, and Ser or Thr for Gly.. Its activity is regulated as follows. Replication or transcription is subject to high level of random mutations by the nucleotide analog ribavirin. Its function is as follows. Forms an icosahedral capsid of pseudo T=3 symmetry with capsid proteins VP2 and VP3. The capsid is 300 Angstroms in diameter, composed of 60 copies of each capsid protein and enclosing the viral positive strand RNA genome. Capsid protein VP1 mainly forms the vertices of the capsid. Capsid protein VP1 interacts with host cell receptor to provide virion attachment to target host cells. This attachment induces virion internalization. Tyrosine kinases are probably involved in the entry process. After binding to its receptor, the capsid undergoes conformational changes. Capsid protein VP1 N-terminus (that contains an amphipathic alpha-helix) and capsid protein VP4 are externalized. Together, they shape a pore in the host membrane through which viral genome is translocated to host cell cytoplasm. Functionally, forms an icosahedral capsid of pseudo T=3 symmetry with capsid proteins VP2 and VP3. The capsid is 300 Angstroms in diameter, composed of 60 copies of each capsid protein and enclosing the viral positive strand RNA genome. In terms of biological role, lies on the inner surface of the capsid shell. After binding to the host receptor, the capsid undergoes conformational changes. Capsid protein VP4 is released, Capsid protein VP1 N-terminus is externalized, and together, they shape a pore in the host membrane through which the viral genome is translocated into the host cell cytoplasm. Component of immature procapsids, which is cleaved into capsid proteins VP4 and VP2 after maturation. Allows the capsid to remain inactive before the maturation step. Its function is as follows. Cysteine protease that cleaves viral polyprotein and specific host proteins. It is responsible for the autocatalytic cleavage between the P1 and P2 regions, which is the first cleavage occurring in the polyprotein. Also cleaves the host translation initiation factor EIF4G1, in order to shut down the capped cellular mRNA translation. Inhibits the host nucleus-cytoplasm protein and RNA trafficking by cleaving host members of the nuclear pores. Counteracts stress granule formation probably by antagonizing its assembly or promoting its dissassembly. Cleaves and inhibits host IFIH1/MDA5, thereby inhibiting the type-I IFN production and the establishment of the antiviral state. Cleaves and inhibits host MAVS, thereby inhibiting the type-I IFN production and the establishment of the antiviral state. Functionally, plays an essential role in the virus replication cycle by acting as a viroporin. Creates a pore in the host endoplasmic reticulum and as a consequence releases Ca2+ in the cytoplasm of infected cell. In turn, high levels of cytoplasmic calcium may trigger membrane trafficking and transport of viral ER-associated proteins to viroplasms, sites of viral genome replication. In terms of biological role, induces and associates with structural rearrangements of intracellular membranes. Displays RNA-binding, nucleotide binding and NTPase activities. May play a role in virion morphogenesis and viral RNA encapsidation by interacting with the capsid protein VP3. Localizes the viral replication complex to the surface of membranous vesicles. Together with protein 3CD binds the Cis-Active RNA Element (CRE) which is involved in RNA synthesis initiation. Acts as a cofactor to stimulate the activity of 3D polymerase, maybe through a nucleid acid chaperone activity. Its function is as follows. Localizes the viral replication complex to the surface of membranous vesicles. It inhibits host cell endoplasmic reticulum-to-Golgi apparatus transport and causes the disassembly of the Golgi complex, possibly through GBF1 interaction. This would result in depletion of MHC, trail receptors and IFN receptors at the host cell surface. Plays an essential role in viral RNA replication by recruiting ACBD3 and PI4KB at the viral replication sites, thereby allowing the formation of the rearranged membranous structures where viral replication takes place. Functionally, acts as a primer for viral RNA replication and remains covalently bound to viral genomic RNA. VPg is uridylylated prior to priming replication into VPg-pUpU. The oriI viral genomic sequence may act as a template for this. The VPg-pUpU is then used as primer on the genomic RNA poly(A) by the RNA-dependent RNA polymerase to replicate the viral genome. During genome replication, the VPg-RNA linkage is removed by the host TDP2, thereby accelerating replication. During the late stage of the replication cycle, host TDP2 is excluded from sites of viral RNA synthesis and encapsidation, allowing for the generation of progeny virions. In terms of biological role, involved in the viral replication complex and viral polypeptide maturation. It exhibits protease activity with a specificity and catalytic efficiency that is different from protease 3C. Protein 3CD lacks polymerase activity. Protein 3CD binds to the 5'UTR of the viral genome. Replicates the viral genomic RNA on the surface of intracellular membranes. May form linear arrays of subunits that propagate along a strong head-to-tail interaction called interface-I. Covalently attaches UMP to a tyrosine of VPg, which is used to prime RNA synthesis. The positive stranded RNA genome is first replicated at virus induced membranous vesicles, creating a dsRNA genomic replication form. This dsRNA is then used as template to synthesize positive stranded RNA genomes. ss(+)RNA genomes are either translated, replicated or encapsidated. Its function is as follows. Major viral protease that mediates proteolytic processing of the polyprotein. Cleaves host EIF5B, contributing to host translation shutoff. Also cleaves host PABPC1, contributing to host translation shutoff. Cleaves host NLRP1, triggers host N-glycine-mediated degradation of the autoinhibitory NLRP1 N-terminal fragment. The polypeptide is Genome polyprotein (Coxsackievirus A24 (strain EH24/70)).